The following is a 99-amino-acid chain: UPF0213 protein PC1_0597 (99 aa).

Residues 8–83 form the GIY-YIG domain; sequence PQWYLYILRT…KQLSKNQKER (76 aa).

The protein belongs to the UPF0213 family.

The polypeptide is UPF0213 protein PC1_0597 (Pectobacterium carotovorum subsp. carotovorum (strain PC1)).